Consider the following 418-residue polypeptide: Serine/threonine-protein kinase PCRK1 (418 aa).

Positions Gly36–Ser63 are disordered. A Protein kinase domain is found at Phe84 to Val369. Residues Ile90–Val98 and Lys118 each bind ATP. Asp218 functions as the Proton acceptor in the catalytic mechanism. Residues Ser373, Ser377, and Ser385 each carry the phosphoserine modification.

This sequence belongs to the protein kinase superfamily. Ser/Thr protein kinase family. In terms of assembly, interacts with FLS2.

Its subcellular location is the cell membrane. It catalyses the reaction L-seryl-[protein] + ATP = O-phospho-L-seryl-[protein] + ADP + H(+). The enzyme catalyses L-threonyl-[protein] + ATP = O-phospho-L-threonyl-[protein] + ADP + H(+). Involved in the activation of early immune responses. Plays a role in pattern-triggered immunity (PTI) induced by pathogen-associated molecular patterns (PAMPs) and damage-associated molecular patterns (DAMPs). Contributes to PTI in response to the bacterial pathogen Pseudomonas syringae pv maculicola strain ES4326. Contributes to PTI in response to the bacterial pathogen Pseudomonas syringae pv tomato strain DC3000. Functions redundantly with PCRK2 in basal resistance against bacterial pathogens and in regulation of plant immunity. Functions together with PCRK2 downstream of the PAMP receptor FLS2. Contributes to the induction of SARD1 and CBP60G, which are transcriptional activator of ICS1, an enzyme involved in salicylate (SA) biosynthesis upon pathogen attack. The chain is Serine/threonine-protein kinase PCRK1 from Arabidopsis thaliana (Mouse-ear cress).